The chain runs to 485 residues: Probable cobyric acid synthase (485 aa).

In terms of domain architecture, GATase cobBQ-type spans 250 to 435; sequence EIEIAVIRLP…LHGLFDNKNI (186 aa). The active-site Nucleophile is Cys328. Residue His427 is part of the active site.

Belongs to the CobB/CobQ family. CobQ subfamily.

It participates in cofactor biosynthesis; adenosylcobalamin biosynthesis. In terms of biological role, catalyzes amidations at positions B, D, E, and G on adenosylcobyrinic A,C-diamide. NH(2) groups are provided by glutamine, and one molecule of ATP is hydrogenolyzed for each amidation. The protein is Probable cobyric acid synthase of Methanosarcina barkeri (strain Fusaro / DSM 804).